The primary structure comprises 274 residues: Large ribosomal subunit protein uL2c (274 aa).

2 disordered regions span residues 1–22 and 225–274; these read MAIH…DNQV and PVDH…RRSK.

The protein belongs to the universal ribosomal protein uL2 family. As to quaternary structure, part of the 50S ribosomal subunit.

The protein localises to the plastid. It is found in the chloroplast. The polypeptide is Large ribosomal subunit protein uL2c (rpl2) (Silene latifolia (White campion)).